The sequence spans 213 residues: Ras-related protein Rab-4B (213 aa).

At A2 the chain carries N-acetylalanine. GDP contacts are provided by G18, T19, G20, K21, S22, and C23. GTP contacts are provided by G18, T19, G20, K21, S22, C23, S37, H39, and T40. Position 22 (S22) interacts with Mg(2+). Positions 39-44 match the Switch 1 motif; it reads HTIGVE. Mg(2+)-binding residues include T40 and D63. Positions 65-74 match the Switch 2 motif; that stretch reads AGQERFRSVT. Residue G66 participates in GTP binding. Q67 bears the 5-glutamyl serotonin mark. Residues N121, K122, D124, A152, and L153 each contribute to the GDP site. 5 residues coordinate GTP: N121, K122, D124, A152, and L153. S185 and S193 each carry phosphoserine. 2 S-geranylgeranyl cysteine lipidation sites follow: C211 and C213. C213 carries the post-translational modification Cysteine methyl ester.

The protein belongs to the small GTPase superfamily. Rab family. In terms of assembly, interacts (GTP-bound form) with RUFY1; the interaction allows endosomal tethering and fusion. The cofactor is Mg(2+). Post-translationally, serotonylation of Gln-67 by TGM2 during activation and aggregation of platelets leads to constitutive activation of GTPase activity.

The protein localises to the cell membrane. Its subcellular location is the early endosome membrane. The catalysed reaction is GTP + H2O = GDP + phosphate + H(+). Regulated by guanine nucleotide exchange factors (GEFs) which promote the exchange of bound GDP for free GTP. Regulated by GTPase activating proteins (GAPs) which increase the GTP hydrolysis activity. Inhibited by GDP dissociation inhibitors (GDIs). Its function is as follows. The small GTPases Rab are key regulators of intracellular membrane trafficking, from the formation of transport vesicles to their fusion with membranes. Rabs cycle between an inactive GDP-bound form and an active GTP-bound form that is able to recruit to membranes different set of downstream effectors directly responsible for vesicle formation, movement, tethering and fusion. RAB4B mediates endosomal tethering and fusion through the interaction with RUFY1 and RAB14. Acts as a regulator of platelet alpha-granule release during activation and aggregation of platelets. This is Ras-related protein Rab-4B from Mus musculus (Mouse).